The following is a 35-amino-acid chain: Trypsin inhibitor 1 (35 aa).

3 disulfides stabilise this stretch: Cys-2–Cys-19, Cys-9–Cys-23, and Cys-18–Cys-34.

In terms of biological role, trypsin inhibitor. This Spinacia oleracea (Spinach) protein is Trypsin inhibitor 1.